A 940-amino-acid polypeptide reads, in one-letter code: Protein translocase subunit SecA 1 (940 aa).

ATP-binding positions include glutamine 83, 101 to 105, and aspartate 490; that span reads GEGKT. The segment at 856–940 is disordered; sequence AEQGGTATAA…AKPPKSVKRR (85 aa).

It belongs to the SecA family. In terms of assembly, monomer and homodimer. Part of the essential Sec protein translocation apparatus which comprises SecA, SecYEG and auxiliary proteins SecDF. Other proteins may also be involved.

The protein resides in the cell membrane. Its subcellular location is the cytoplasm. The enzyme catalyses ATP + H2O + cellular proteinSide 1 = ADP + phosphate + cellular proteinSide 2.. In terms of biological role, part of the Sec protein translocase complex. Interacts with the SecYEG preprotein conducting channel. Has a central role in coupling the hydrolysis of ATP to the transfer of proteins into and across the cell membrane, serving as an ATP-driven molecular motor driving the stepwise translocation of polypeptide chains across the membrane. In Mycolicibacterium paratuberculosis (strain ATCC BAA-968 / K-10) (Mycobacterium paratuberculosis), this protein is Protein translocase subunit SecA 1.